We begin with the raw amino-acid sequence, 46 residues long: Amine oxidase [flavin-containing] A (46 aa).

The protein belongs to the flavin monoamine oxidase family. In terms of assembly, monomer, homo- or heterodimer (containing two subunits of similar size). Each subunit contains a covalently bound flavin. Enzymatically active as monomer. FAD is required as a cofactor.

The protein resides in the mitochondrion outer membrane. It carries out the reaction a secondary aliphatic amine + O2 + H2O = a primary amine + an aldehyde + H2O2. The catalysed reaction is a primary methyl amine + O2 + H2O = an aldehyde + H2O2 + NH4(+). The enzyme catalyses (R)-adrenaline + O2 + H2O = (R)-3,4-dihydroxymandelaldehyde + methylamine + H2O2. It catalyses the reaction dopamine + O2 + H2O = 3,4-dihydroxyphenylacetaldehyde + H2O2 + NH4(+). It carries out the reaction tyramine + O2 + H2O = (4-hydroxyphenyl)acetaldehyde + H2O2 + NH4(+). The catalysed reaction is (R)-noradrenaline + O2 + H2O = (R)-3,4-dihydroxymandelaldehyde + H2O2 + NH4(+). The enzyme catalyses serotonin + O2 + H2O = (5-hydroxyindol-3-yl)acetaldehyde + H2O2 + NH4(+). It catalyses the reaction kynuramine + O2 + H2O = 3-(2-aminophenyl)-3-oxopropanal + H2O2 + NH4(+). It carries out the reaction tryptamine + O2 + H2O = indole-3-acetaldehyde + H2O2 + NH4(+). The catalysed reaction is 2-phenylethylamine + O2 + H2O = 2-phenylacetaldehyde + H2O2 + NH4(+). Catalyzes the oxidative deamination of primary and some secondary amine such as neurotransmitters, with concomitant reduction of oxygen to hydrogen peroxide and has important functions in the metabolism of neuroactive and vasoactive amines in the central nervous system and peripheral tissues. Preferentially oxidizes serotonin. Also catalyzes the oxidative deamination of kynuramine to 3-(2-aminophenyl)-3-oxopropanal that can spontaneously condense to 4-hydroxyquinoline. The polypeptide is Amine oxidase [flavin-containing] A (Ovis aries (Sheep)).